A 980-amino-acid polypeptide reads, in one-letter code: Chitin binding domain containing chtb-2 (980 aa).

The N-terminal stretch at Met-1–Thr-20 is a signal peptide. Asn-187 and Asn-190 each carry an N-linked (GlcNAc...) asparagine glycan. 3 disordered regions span residues Glu-310–Asp-354, Gln-431–Gln-451, and Glu-486–Ala-512. Asn-941 and Asn-975 each carry an N-linked (GlcNAc...) asparagine glycan.

This chain is Chitin binding domain containing chtb-2, found in Caenorhabditis elegans.